A 155-amino-acid chain; its full sequence is SsrA-binding protein (155 aa).

It belongs to the SmpB family.

Its subcellular location is the cytoplasm. Functionally, required for rescue of stalled ribosomes mediated by trans-translation. Binds to transfer-messenger RNA (tmRNA), required for stable association of tmRNA with ribosomes. tmRNA and SmpB together mimic tRNA shape, replacing the anticodon stem-loop with SmpB. tmRNA is encoded by the ssrA gene; the 2 termini fold to resemble tRNA(Ala) and it encodes a 'tag peptide', a short internal open reading frame. During trans-translation Ala-aminoacylated tmRNA acts like a tRNA, entering the A-site of stalled ribosomes, displacing the stalled mRNA. The ribosome then switches to translate the ORF on the tmRNA; the nascent peptide is terminated with the 'tag peptide' encoded by the tmRNA and targeted for degradation. The ribosome is freed to recommence translation, which seems to be the essential function of trans-translation. The sequence is that of SsrA-binding protein from Streptococcus pyogenes serotype M4 (strain MGAS10750).